The following is a 530-amino-acid chain: C2H2-type transcription factor MSN2 (530 aa).

2 C2H2-type zinc fingers span residues Phe-409 to His-432 and Phe-438 to His-460.

Its subcellular location is the nucleus. It is found in the cytoplasm. Functionally, transcription factor that acts as a key downstream transcription factor in the HOG1-MAPK pathway. Plays crucial roles in the regulation of conidiation, virulence and multi-stress responses. In addition to regulating the expression of genes specifically involved in stress-response, conidiation and virulence, controls also expression of cellular signaling factors. This is C2H2-type transcription factor MSN2 from Metarhizium robertsii (strain ARSEF 23 / ATCC MYA-3075) (Metarhizium anisopliae (strain ARSEF 23)).